We begin with the raw amino-acid sequence, 1082 residues long: RNA-directed RNA polymerase (1082 aa).

The RdRp catalytic domain maps to 498–670 (LSYGDVTRYL…ALASLTGCEI (173 aa)).

The protein belongs to the reoviridae RNA-directed RNA polymerase family. As to quaternary structure, interacts with VP3 (Potential). Interacts with VP2; this interaction activates VP1. Interacts with NSP5; this interaction is probably necessary for the formation of functional virus factories. Interacts with NSP2; this interaction is weak. Requires Mg(2+) as cofactor.

It is found in the virion. It catalyses the reaction RNA(n) + a ribonucleoside 5'-triphosphate = RNA(n+1) + diphosphate. Functionally, RNA-directed RNA polymerase that is involved in both transcription and genome replication. Together with VP3 capping enzyme, forms an enzyme complex positioned near the channels situated at each of the five-fold vertices of the core. Following infection, the outermost layer of the virus is lost, leaving a double-layered particle (DLP) made up of the core and VP6 shell. VP1 then catalyzes the transcription of fully conservative plus-strand genomic RNAs that are extruded through the DLP's channels into the cytoplasm where they function as mRNAs for translation of viral proteins. One copy of each of the viral (+)RNAs is also recruited during core assembly, together with newly synthesized polymerase complexes and VP2. The polymerase of these novo-formed particles catalyzes the synthesis of complementary minus-strands leading to dsDNA formation. To do so, the polymerase specifically recognizes conserved 3' sequence(s) in plus-strand RNA templates. Once dsRNA synthesis is complete, the polymerase switches to the transcriptional mode, thus providing secondary transcription. This chain is RNA-directed RNA polymerase, found in Rotavirus C (strain RVC/Pig/United States/Cowden/1980) (RV-C).